The chain runs to 319 residues: HPr kinase/phosphorylase (319 aa).

Active-site residues include histidine 141 and lysine 162. ATP is bound at residue 156–163 (GNSGVGKS). A Mg(2+)-binding site is contributed by serine 163. Aspartate 180 acts as the Proton acceptor; for phosphorylation activity. Proton donor; for dephosphorylation activity in catalysis. Residues 204 to 213 (MEIRGIGIID) form an important for the catalytic mechanism of both phosphorylation and dephosphorylation region. Glutamate 205 is a Mg(2+) binding site. Arginine 246 is an active-site residue. The important for the catalytic mechanism of dephosphorylation stretch occupies residues 267–272 (PVKVGR).

It belongs to the HPrK/P family. In terms of assembly, homohexamer. The cofactor is Mg(2+).

It carries out the reaction [HPr protein]-L-serine + ATP = [HPr protein]-O-phospho-L-serine + ADP + H(+). The enzyme catalyses [HPr protein]-O-phospho-L-serine + phosphate + H(+) = [HPr protein]-L-serine + diphosphate. In terms of biological role, catalyzes the ATP- as well as the pyrophosphate-dependent phosphorylation of a specific serine residue in HPr, a phosphocarrier protein of the phosphoenolpyruvate-dependent sugar phosphotransferase system (PTS). HprK/P also catalyzes the pyrophosphate-producing, inorganic phosphate-dependent dephosphorylation (phosphorolysis) of seryl-phosphorylated HPr (P-Ser-HPr). The two antagonistic activities of HprK/P are regulated by several intracellular metabolites, which change their concentration in response to the absence or presence of rapidly metabolisable carbon sources (glucose, fructose, etc.) in the growth medium. Therefore, by controlling the phosphorylation state of HPr, HPrK/P is a sensor enzyme that plays a major role in the regulation of carbon metabolism and sugar transport: it mediates carbon catabolite repression (CCR), and regulates PTS-catalyzed carbohydrate uptake and inducer exclusion. This is HPr kinase/phosphorylase from Lactobacillus johnsonii (strain CNCM I-12250 / La1 / NCC 533).